The sequence spans 124 residues: Late histone H2B.2.2 (124 aa).

Residues 1-32 (MPAKQTSGKGAKKAGKAKGRPSGASKTRRRKR) are disordered. Basic residues predominate over residues 10-19 (GAKKAGKAKG). An O-linked (GlcNAc) serine glycan is attached at S111. Residue K119 forms a Glycyl lysine isopeptide (Lys-Gly) (interchain with G-Cter in ubiquitin) linkage.

This sequence belongs to the histone H2B family. The nucleosome is a histone octamer containing two molecules each of H2A, H2B, H3 and H4 assembled in one H3-H4 heterotetramer and two H2A-H2B heterodimers. The octamer wraps approximately 147 bp of DNA. Post-translationally, monoubiquitination of Lys-119 gives a specific tag for epigenetic transcriptional activation and is also prerequisite for histone H3 'Lys-4' and 'Lys-79' methylation. In terms of processing, glcNAcylation at Ser-111 promotes monoubiquitination of Lys-119. It fluctuates in response to extracellular glucose, and associates with transcribed genes.

It is found in the nucleus. The protein resides in the chromosome. Core component of nucleosome. Nucleosomes wrap and compact DNA into chromatin, limiting DNA accessibility to the cellular machineries which require DNA as a template. Histones thereby play a central role in transcription regulation, DNA repair, DNA replication and chromosomal stability. DNA accessibility is regulated via a complex set of post-translational modifications of histones, also called histone code, and nucleosome remodeling. The protein is Late histone H2B.2.2 of Psammechinus miliaris (Green sea urchin).